Here is a 304-residue protein sequence, read N- to C-terminus: Glutamyl-Q tRNA(Asp) synthetase (304 aa).

L-glutamate-binding positions include 14-18 (RFAPS) and glutamate 50. The 'HIGH' region motif lies at 17 to 27 (PSPSGPLHFGS). Zn(2+) contacts are provided by cysteine 106, cysteine 108, tyrosine 120, and cysteine 124. 2 residues coordinate L-glutamate: tyrosine 178 and arginine 196. Residues 234–238 (KLSKQ) carry the 'KMSKS' region motif. Lysine 237 serves as a coordination point for ATP.

It belongs to the class-I aminoacyl-tRNA synthetase family. GluQ subfamily. Requires Zn(2+) as cofactor.

Functionally, catalyzes the tRNA-independent activation of glutamate in presence of ATP and the subsequent transfer of glutamate onto a tRNA(Asp). Glutamate is transferred on the 2-amino-5-(4,5-dihydroxy-2-cyclopenten-1-yl) moiety of the queuosine in the wobble position of the QUC anticodon. The chain is Glutamyl-Q tRNA(Asp) synthetase from Vibrio cholerae serotype O1 (strain ATCC 39315 / El Tor Inaba N16961).